A 435-amino-acid polypeptide reads, in one-letter code: NADH-quinone oxidoreductase subunit D (435 aa).

It belongs to the complex I 49 kDa subunit family. In terms of assembly, NDH-1 is composed of 14 different subunits. Subunits NuoB, C, D, E, F, and G constitute the peripheral sector of the complex.

It localises to the cell inner membrane. It carries out the reaction a quinone + NADH + 5 H(+)(in) = a quinol + NAD(+) + 4 H(+)(out). NDH-1 shuttles electrons from NADH, via FMN and iron-sulfur (Fe-S) centers, to quinones in the respiratory chain. The immediate electron acceptor for the enzyme in this species is believed to be ubiquinone. Couples the redox reaction to proton translocation (for every two electrons transferred, four hydrogen ions are translocated across the cytoplasmic membrane), and thus conserves the redox energy in a proton gradient. This chain is NADH-quinone oxidoreductase subunit D, found in Xanthomonas euvesicatoria pv. vesicatoria (strain 85-10) (Xanthomonas campestris pv. vesicatoria).